The sequence spans 116 residues: Protein BIC2 (116 aa).

Disordered stretches follow at residues 1–33 (MKNT…TCFP) and 95–116 (DSGD…ESSC).

It is found in the nucleus. Its function is as follows. Regulates the blue-light dependent dimerization of CRY2 and formation of photobodies. Inhibits CRY phosphorylation. The chain is Protein BIC2 from Arabidopsis thaliana (Mouse-ear cress).